A 64-amino-acid polypeptide reads, in one-letter code: Large ribosomal subunit protein bL35 (64 aa).

The disordered stretch occupies residues methionine 1–threonine 41.

This sequence belongs to the bacterial ribosomal protein bL35 family.

The sequence is that of Large ribosomal subunit protein bL35 from Nocardia farcinica (strain IFM 10152).